We begin with the raw amino-acid sequence, 119 residues long: Immunoglobulin heavy variable 2-26 (119 aa).

Residues 1–19 (MDTLCYTLLLLTTPSWVLS) form the signal peptide. Position 20 is a pyrrolidone carboxylic acid (Q20). The tract at residues 20–44 (QVTLKESGPVLVKPTETLTLTCTVS) is framework-1. One can recognise an Ig-like domain in the interval 20 to 119 (QVTLKESGPV…DTATYYCARI (100 aa)). C41 and C116 are oxidised to a cystine. The interval 45–54 (GFSLSNARMG) is complementarity-determining-1. The tract at residues 55–71 (VSWIRQPPGKALEWLAH) is framework-2. Residues 72–78 (IFSNDEK) form a complementarity-determining-2 region. A framework-3 region spans residues 79 to 116 (SYSTSLKSRLTISKDTSKSQVVLTMTNMDPVDTATYYC). Residues 117 to 119 (ARI) form a complementarity-determining-3 region.

Immunoglobulins are composed of two identical heavy chains and two identical light chains; disulfide-linked.

It localises to the secreted. It is found in the cell membrane. Functionally, v region of the variable domain of immunoglobulin heavy chains that participates in the antigen recognition. Immunoglobulins, also known as antibodies, are membrane-bound or secreted glycoproteins produced by B lymphocytes. In the recognition phase of humoral immunity, the membrane-bound immunoglobulins serve as receptors which, upon binding of a specific antigen, trigger the clonal expansion and differentiation of B lymphocytes into immunoglobulins-secreting plasma cells. Secreted immunoglobulins mediate the effector phase of humoral immunity, which results in the elimination of bound antigens. The antigen binding site is formed by the variable domain of one heavy chain, together with that of its associated light chain. Thus, each immunoglobulin has two antigen binding sites with remarkable affinity for a particular antigen. The variable domains are assembled by a process called V-(D)-J rearrangement and can then be subjected to somatic hypermutations which, after exposure to antigen and selection, allow affinity maturation for a particular antigen. The polypeptide is Immunoglobulin heavy variable 2-26 (Homo sapiens (Human)).